The sequence spans 378 residues: UDP-N-acetylglucosamine--N-acetylmuramyl-(pentapeptide) pyrophosphoryl-undecaprenol N-acetylglucosamine transferase (378 aa).

UDP-N-acetyl-alpha-D-glucosamine contacts are provided by residues 13–15, N124, R165, S193, and Q294; that span reads TGG.

Belongs to the glycosyltransferase 28 family. MurG subfamily.

It is found in the cell inner membrane. The catalysed reaction is di-trans,octa-cis-undecaprenyl diphospho-N-acetyl-alpha-D-muramoyl-L-alanyl-D-glutamyl-meso-2,6-diaminopimeloyl-D-alanyl-D-alanine + UDP-N-acetyl-alpha-D-glucosamine = di-trans,octa-cis-undecaprenyl diphospho-[N-acetyl-alpha-D-glucosaminyl-(1-&gt;4)]-N-acetyl-alpha-D-muramoyl-L-alanyl-D-glutamyl-meso-2,6-diaminopimeloyl-D-alanyl-D-alanine + UDP + H(+). The protein operates within cell wall biogenesis; peptidoglycan biosynthesis. Cell wall formation. Catalyzes the transfer of a GlcNAc subunit on undecaprenyl-pyrophosphoryl-MurNAc-pentapeptide (lipid intermediate I) to form undecaprenyl-pyrophosphoryl-MurNAc-(pentapeptide)GlcNAc (lipid intermediate II). The polypeptide is UDP-N-acetylglucosamine--N-acetylmuramyl-(pentapeptide) pyrophosphoryl-undecaprenol N-acetylglucosamine transferase (Agrobacterium fabrum (strain C58 / ATCC 33970) (Agrobacterium tumefaciens (strain C58))).